Consider the following 207-residue polypeptide: Ribonuclease HII (207 aa).

The region spanning 18–207 (GLVAGVDEAG…VAEVLREALP (190 aa)) is the RNase H type-2 domain. Residues Asp24, Glu25, and Asp116 each coordinate a divalent metal cation.

The protein belongs to the RNase HII family. The cofactor is Mn(2+). Mg(2+) serves as cofactor.

The protein resides in the cytoplasm. The catalysed reaction is Endonucleolytic cleavage to 5'-phosphomonoester.. In terms of biological role, endonuclease that specifically degrades the RNA of RNA-DNA hybrids. This chain is Ribonuclease HII, found in Albidiferax ferrireducens (strain ATCC BAA-621 / DSM 15236 / T118) (Rhodoferax ferrireducens).